A 269-amino-acid polypeptide reads, in one-letter code: Subtilisin BL (269 aa).

Q2 is a Ca(2+) binding site. The Peptidase S8 domain maps to 5 to 268 (PWGISRVQAP…SGLVNAEAAT (264 aa)). Residue D32 is the Charge relay system of the active site. D40 contacts Ca(2+). H62 (charge relay system) is an active-site residue. Ca(2+) is bound by residues L73, N75, I77, V79, A163, Y165, and A168. S215 acts as the Charge relay system in catalysis.

This sequence belongs to the peptidase S8 family. Requires Ca(2+) as cofactor.

The protein localises to the secreted. It catalyses the reaction Hydrolysis of proteins with broad specificity for peptide bonds, and a preference for a large uncharged residue in P1. Hydrolyzes peptide amides.. In terms of biological role, subtilisin is an extracellular alkaline serine protease, it catalyzes the hydrolysis of proteins and peptide amides. The polypeptide is Subtilisin BL (Lederbergia lenta (Bacillus lentus)).